We begin with the raw amino-acid sequence, 498 residues long: L-amino acid oxidase Bs29 (498 aa).

An N-terminal signal peptide occupies residues 1–3 (SCA). A disulfide bridge links Cys-12 with Cys-175. FAD is bound by residues 45–46 (MS), 65–66 (EA), Arg-73, and 89–92 (GPMR). Arg-92 is a substrate binding site. Residue Asn-174 is glycosylated (N-linked (GlcNAc...) asparagine). His-225 provides a ligand contact to substrate. Val-263 contacts FAD. A disulfide bond links Cys-333 and Cys-414. Tyr-374 contacts substrate. Residues Glu-459 and 466-471 (GWIDST) each bind FAD. Position 466–467 (466–467 (GW)) interacts with substrate.

The protein belongs to the flavin monoamine oxidase family. FIG1 subfamily. In terms of assembly, monomer. This is in contrast with most of its orthologs, that are non-covalently linked homodimers. The cofactor is FAD. Expressed by the venom gland.

Its subcellular location is the secreted. The enzyme catalyses an L-alpha-amino acid + O2 + H2O = a 2-oxocarboxylate + H2O2 + NH4(+). The catalysed reaction is L-leucine + O2 + H2O = 4-methyl-2-oxopentanoate + H2O2 + NH4(+). Its function is as follows. Catalyzes an oxidative deamination of predominantly hydrophobic and aromatic L-amino acids, thus producing hydrogen peroxide that may contribute to the diverse toxic effects of this enzyme. Shows activity on L-Leu. Damage cell membranes of the Gram-positive bacteria S.aureus (MIC=4 ug/ml and MBC=8 ug/ml) and the Gram-negative bacteria A.baumanni (MIC=2 ug/ml and MBC=4 ug/ml). This antibacterial activity is dependent on the production of hydrogen peroxyde, since it is inhibited by catalase, a hydrogen peroxyde scavenger. The chain is L-amino acid oxidase Bs29 from Bothriechis schlegelii (Eyelash palm pitviper).